The chain runs to 339 residues: Anthranilate phosphoribosyltransferase (339 aa).

5-phospho-alpha-D-ribose 1-diphosphate-binding positions include Gly81, 84-85 (GD), Thr89, 91-94 (NVST), 109-117 (KHGNRSVSS), and Ser121. Gly81 contributes to the anthranilate binding site. Ser93 lines the Mg(2+) pocket. Position 112 (Asn112) interacts with anthranilate. An anthranilate-binding site is contributed by Arg167. Asp226 and Glu227 together coordinate Mg(2+).

The protein belongs to the anthranilate phosphoribosyltransferase family. In terms of assembly, homodimer. It depends on Mg(2+) as a cofactor.

It carries out the reaction N-(5-phospho-beta-D-ribosyl)anthranilate + diphosphate = 5-phospho-alpha-D-ribose 1-diphosphate + anthranilate. Its pathway is amino-acid biosynthesis; L-tryptophan biosynthesis; L-tryptophan from chorismate: step 2/5. In terms of biological role, catalyzes the transfer of the phosphoribosyl group of 5-phosphorylribose-1-pyrophosphate (PRPP) to anthranilate to yield N-(5'-phosphoribosyl)-anthranilate (PRA). The chain is Anthranilate phosphoribosyltransferase from Persephonella marina (strain DSM 14350 / EX-H1).